The sequence spans 199 residues: Shikimate kinase (199 aa).

32–37 (GSGKTS) contacts ATP. T36 contacts Mg(2+). Residues D54, R78, and G100 each coordinate substrate. R138 is an ATP binding site. R157 contributes to the substrate binding site.

This sequence belongs to the shikimate kinase family. In terms of assembly, monomer. It depends on Mg(2+) as a cofactor.

Its subcellular location is the cytoplasm. The enzyme catalyses shikimate + ATP = 3-phosphoshikimate + ADP + H(+). It participates in metabolic intermediate biosynthesis; chorismate biosynthesis; chorismate from D-erythrose 4-phosphate and phosphoenolpyruvate: step 5/7. Catalyzes the specific phosphorylation of the 3-hydroxyl group of shikimic acid using ATP as a cosubstrate. The chain is Shikimate kinase from Synechococcus sp. (strain CC9605).